The chain runs to 445 residues: Exodeoxyribonuclease 7 large subunit (445 aa).

Belongs to the XseA family. As to quaternary structure, heterooligomer composed of large and small subunits.

The protein localises to the cytoplasm. It catalyses the reaction Exonucleolytic cleavage in either 5'- to 3'- or 3'- to 5'-direction to yield nucleoside 5'-phosphates.. Functionally, bidirectionally degrades single-stranded DNA into large acid-insoluble oligonucleotides, which are then degraded further into small acid-soluble oligonucleotides. The sequence is that of Exodeoxyribonuclease 7 large subunit from Shewanella halifaxensis (strain HAW-EB4).